The chain runs to 261 residues: Spermatogenesis-associated protein 46 (261 aa).

The interval 140–159 (SSSSSPENTCPREATKKSRH) is disordered.

Testis-specific.

The protein localises to the nucleus membrane. In terms of biological role, plays a role in spermiogenesis and fertilization. This is Spermatogenesis-associated protein 46 from Homo sapiens (Human).